The following is a 200-amino-acid chain: Shikimate kinase (200 aa).

ATP is bound at residue 41 to 46 (GVGKSS). Serine 45 contacts Mg(2+). 3 residues coordinate substrate: aspartate 63, arginine 87, and glycine 109. Arginine 147 provides a ligand contact to ATP. Arginine 166 contributes to the substrate binding site.

It belongs to the shikimate kinase family. In terms of assembly, monomer. Mg(2+) serves as cofactor.

It localises to the cytoplasm. The enzyme catalyses shikimate + ATP = 3-phosphoshikimate + ADP + H(+). The protein operates within metabolic intermediate biosynthesis; chorismate biosynthesis; chorismate from D-erythrose 4-phosphate and phosphoenolpyruvate: step 5/7. Its function is as follows. Catalyzes the specific phosphorylation of the 3-hydroxyl group of shikimic acid using ATP as a cosubstrate. This Caulobacter vibrioides (strain NA1000 / CB15N) (Caulobacter crescentus) protein is Shikimate kinase.